Here is a 489-residue protein sequence, read N- to C-terminus: Betaine aldehyde dehydrogenase (489 aa).

K(+) contacts are provided by T26 and D93. Residue 150–152 participates in NAD(+) binding; sequence GAW. Residue K162 is the Charge relay system of the active site. Residue 176 to 179 coordinates NAD(+); it reads KPSE. I180 lines the K(+) pocket. 229 to 232 is a binding site for NAD(+); that stretch reads GVET. L245 is a K(+) binding site. The Proton acceptor role is filled by E251. NAD(+) contacts are provided by G253, C285, and E386. The active-site Nucleophile is the C285. C285 carries the cysteine sulfenic acid (-SOH) modification. The K(+) site is built by K456 and G459. The active-site Charge relay system is the E463.

Belongs to the aldehyde dehydrogenase family. In terms of assembly, dimer of dimers. Requires K(+) as cofactor.

It catalyses the reaction betaine aldehyde + NAD(+) + H2O = glycine betaine + NADH + 2 H(+). It functions in the pathway amine and polyamine biosynthesis; betaine biosynthesis via choline pathway; betaine from betaine aldehyde: step 1/1. Its function is as follows. Involved in the biosynthesis of the osmoprotectant glycine betaine. Catalyzes the irreversible oxidation of betaine aldehyde to the corresponding acid. This chain is Betaine aldehyde dehydrogenase, found in Paraburkholderia phytofirmans (strain DSM 17436 / LMG 22146 / PsJN) (Burkholderia phytofirmans).